The following is a 313-amino-acid chain: MRIVFVGTPEFAAEILEHLIKNGFNVVGVVTQPDKPRGRGRKVEPTPVKVVAEKHRVPFIQPESINKKEALEFLRSVGPDVIIVASYGKILGEKVLSLPSLGCYNIHPSLLPKYRGASPIQRVLENGEERTGVTIYKMVRELDAGPIALQREISIDPFETFDQLEKRLIELSKEMSIEFLEKLKVGDIELKEQDHSRATYAPMIKKEDLIVDFSKDAESVKNKIRAYDSRPGARAFLGNDEVKLFGVTAIDSSGDEPGLIHYIDREGAWIGTGKGMVKVKYLQLPGKKKLTFWELRNGRLIEEGMKLEGRYES.

(6S)-5,6,7,8-tetrahydrofolate is bound at residue 109 to 112 (SLLP).

Belongs to the Fmt family.

It carries out the reaction L-methionyl-tRNA(fMet) + (6R)-10-formyltetrahydrofolate = N-formyl-L-methionyl-tRNA(fMet) + (6S)-5,6,7,8-tetrahydrofolate + H(+). Its function is as follows. Attaches a formyl group to the free amino group of methionyl-tRNA(fMet). The formyl group appears to play a dual role in the initiator identity of N-formylmethionyl-tRNA by promoting its recognition by IF2 and preventing the misappropriation of this tRNA by the elongation apparatus. This is Methionyl-tRNA formyltransferase from Thermotoga sp. (strain RQ2).